A 245-amino-acid chain; its full sequence is MKRVAAVIEYDGSNFFGYQGQPDVRTVQGVIEDALERIFKQRIYIQAAGRTDTGVHANGQLIAFNCPNDRMTTEDIRNAMNANLPDDVYVKEVFEVPVNFHPRFDVTKRIYHYFILTSRQKNVFLRKYVWWFPYELDLDAMRKAVKYLEGTHDFTSFKTGSDERDPVRTIYRIRILRLKNDLVLIRVEGRSFLRRMVRNIVAALVKVGLKQWEPEKMKEVLEARDRSAAAGTAPAHGLYFYKVLF.

Asp52 serves as the catalytic Nucleophile. Tyr111 contacts substrate.

The protein belongs to the tRNA pseudouridine synthase TruA family. Homodimer.

It carries out the reaction uridine(38/39/40) in tRNA = pseudouridine(38/39/40) in tRNA. In terms of biological role, formation of pseudouridine at positions 38, 39 and 40 in the anticodon stem and loop of transfer RNAs. This is tRNA pseudouridine synthase A from Thermotoga petrophila (strain ATCC BAA-488 / DSM 13995 / JCM 10881 / RKU-1).